The following is a 219-amino-acid chain: 2-C-methyl-D-erythritol 4-phosphate cytidylyltransferase (219 aa).

This sequence belongs to the IspD/TarI cytidylyltransferase family. IspD subfamily.

The enzyme catalyses 2-C-methyl-D-erythritol 4-phosphate + CTP + H(+) = 4-CDP-2-C-methyl-D-erythritol + diphosphate. It functions in the pathway isoprenoid biosynthesis; isopentenyl diphosphate biosynthesis via DXP pathway; isopentenyl diphosphate from 1-deoxy-D-xylulose 5-phosphate: step 2/6. In terms of biological role, catalyzes the formation of 4-diphosphocytidyl-2-C-methyl-D-erythritol from CTP and 2-C-methyl-D-erythritol 4-phosphate (MEP). In Phocaeicola vulgatus (strain ATCC 8482 / DSM 1447 / JCM 5826 / CCUG 4940 / NBRC 14291 / NCTC 11154) (Bacteroides vulgatus), this protein is 2-C-methyl-D-erythritol 4-phosphate cytidylyltransferase.